The primary structure comprises 471 residues: Ribulose bisphosphate carboxylase large chain (471 aa).

Position 5 is an N6,N6,N6-trimethyllysine (Lys-5). Substrate-binding residues include Asn-114 and Thr-164. Lys-166 (proton acceptor) is an active-site residue. Residue Lys-168 coordinates substrate. Mg(2+) is bound by residues Lys-192, Asp-194, and Glu-195. Lys-192 bears the N6-carboxylysine mark. His-285 functions as the Proton acceptor in the catalytic mechanism. Substrate is bound by residues Arg-286, His-318, and Ser-370.

It belongs to the RuBisCO large chain family. Type I subfamily. In terms of assembly, heterohexadecamer of 8 large chains and 8 small chains; disulfide-linked. The disulfide link is formed within the large subunit homodimers. Mg(2+) is required as a cofactor. The disulfide bond which can form in the large chain dimeric partners within the hexadecamer appears to be associated with oxidative stress and protein turnover.

It localises to the plastid. It is found in the chloroplast. It catalyses the reaction 2 (2R)-3-phosphoglycerate + 2 H(+) = D-ribulose 1,5-bisphosphate + CO2 + H2O. It carries out the reaction D-ribulose 1,5-bisphosphate + O2 = 2-phosphoglycolate + (2R)-3-phosphoglycerate + 2 H(+). Its function is as follows. RuBisCO catalyzes two reactions: the carboxylation of D-ribulose 1,5-bisphosphate, the primary event in carbon dioxide fixation, as well as the oxidative fragmentation of the pentose substrate in the photorespiration process. Both reactions occur simultaneously and in competition at the same active site. The chain is Ribulose bisphosphate carboxylase large chain from Schlumbergera truncata (Thanksgiving cactus).